The following is a 203-amino-acid chain: GTP-binding protein ypt1 (203 aa).

GTP contacts are provided by residues 15–23 (GDSGVGKSC), 33–40 (YTESYIST), 63–67 (DTAGQ), 121–124 (NKSD), and 151–153 (SAK). An Effector region motif is present at residues 37-45 (YISTIGVDF). The tract at residues 180-203 (NNTKASVNVSPGHGVSNNSSGGCC) is disordered. S-geranylgeranyl cysteine attachment occurs at residues Cys202 and Cys203.

It belongs to the small GTPase superfamily. Rab family.

The protein resides in the endoplasmic reticulum membrane. The protein localises to the golgi apparatus membrane. It localises to the cytoplasm. It is found in the preautophagosomal structure membrane. Rab activation is generally mediated by a guanine exchange factor (GEF), while inactivation through hydrolysis of bound GTP is catalyzed by a GTPase activating protein (GAP). Functionally, the small GTPases Rab are key regulators of intracellular membrane trafficking, from the formation of transport vesicles to their fusion with membranes. Rabs cycle between an inactive GDP-bound form and an active GTP-bound form that is able to recruit to membranes different set of downstream effectors directly responsible for vesicle formation, movement, tethering and fusion. Ypt-1 regulates the trafficking of secretory vesicles from the endoplasmic reticulum (ER) to the Golgi. Plays a role in the initial events of the autophagic vacuole development which take place at specialized regions of the endoplasmic reticulum. Also involved in the recycling of membrane proteins. This is GTP-binding protein ypt1 (ypt-1) from Neurospora crassa (strain ATCC 24698 / 74-OR23-1A / CBS 708.71 / DSM 1257 / FGSC 987).